We begin with the raw amino-acid sequence, 604 residues long: Protein CBFA2T1 (604 aa).

The segment at 32 to 114 is disordered; sequence TEKHSTMPDS…SSSSLANQQL (83 aa). The residue at position 41 (Ser-41) is a Phosphoserine. A compositionally biased stretch (polar residues) spans 63 to 86; it reads QGAPRTSSFTPTTLTNGTSHSPTA. Low complexity predominate over residues 95-114; the sequence is NGFSNGPSSSSSSSLANQQL. The 96-residue stretch at 120-215 folds into the TAFH domain; it reads ARQLSKLKRF…NPAQYLAQHE (96 aa). The tract at residues 230–298 is disordered; the sequence is SELLLDVNEN…LPHPTPPPPQ (69 aa). Basic and acidic residues predominate over residues 238 to 264; the sequence is ENGKRRTPDRTKENGFDREPLHSEHPS. Positions 271–285 are enriched in polar residues; that stretch reads SPGQRYSPNNGLSYQ. A compositionally biased stretch (pro residues) spans 289 to 298; sequence LPHPTPPPPQ. Residues 337–383 form an important for oligomerization region; it reads QEEMIDHRLTDREWAEEWKHLDHLLNCIMDMVEKTRRSLTVLRRCQE. The interval 337 to 383 is nervy homology region 2 (NHR2); the sequence is QEEMIDHRLTDREWAEEWKHLDHLLNCIMDMVEKTRRSLTVLRRCQE. Positions 401 to 423 are disordered; the sequence is DLKKGGGSSSSHSRQQSPVNPDP. A Phosphoserine modification is found at Ser-417. The segment at 443-492 is nervy homology region 3 (NHR3); sequence EEIWKKAEEAVNEVKRQAMTELQKAVSEAERKAHDMITTERAKMERTVAE. Zn(2+)-binding residues include Cys-515, Cys-518, Cys-526, Cys-529, Cys-535, Cys-539, His-547, and Cys-551. The MYND-type zinc finger occupies 515 to 551; sequence CWNCGRKASETCSGCNTARYCGSFCQHKDWEKHHHIC. The span at 557 to 576 shows a compositional bias: polar residues; the sequence is AQQQGDTPAVSSSVTPNSGA. The tract at residues 557–604 is disordered; it reads AQQQGDTPAVSSSVTPNSGAGSPMDTPPAATPRSTTPGTPSTIETTPR. Residues 587–604 show a composition bias toward low complexity; the sequence is TPRSTTPGTPSTIETTPR.

This sequence belongs to the CBFA2T family. As to quaternary structure, homooligomer. Homotetramerization is mediated by nervy homology region 2 (NRH2). Can interact with CBFA2T2 and CBFA2T3; heterotetramerization between members of the CBFA2T family is proposed. Interacts with TCF12, SIN3A, HDAC1, HDAC2, HDAC3, NCOR1, NCOR2. Interacts with ATN1 (via its N-terminus); the interaction enhances the transcriptional repression. Interacts (via its N-terminus) with ZBTB16; the interaction increases the transcription repression activity of ZBTB16. AML1-MTG8/ETO fusion protein interacts with CBFB. AML1-MTG8/ETO is part of a stable transcription factor complex AETFC in leukemic cells; AETFC formation seems to be involved in recruitment of EP300. AML1-MTG8/ETO nervy homology region 2-mediated oligomerization is proposed to be homotypic, required for AML1-MTG8/ETO-mediated transformation of primary hematopoietic cells and is required for AML1-MTG8/ETO interaction with TCF12. Most abundantly expressed in brain. Lower levels in lung, heart, testis and ovary.

It is found in the nucleus. Its function is as follows. Transcriptional corepressor which facilitates transcriptional repression via its association with DNA-binding transcription factors and recruitment of other corepressors and histone-modifying enzymes. Can repress the expression of MMP7 in a ZBTB33-dependent manner. Can repress transactivation mediated by TCF12. Acts as a negative regulator of adipogenesis. The AML1-MTG8/ETO fusion protein frequently found in leukemic cells is involved in leukemogenesis and contributes to hematopoietic stem/progenitor cell self-renewal. In Homo sapiens (Human), this protein is Protein CBFA2T1 (RUNX1T1).